The sequence spans 1081 residues: Probable sucrose-phosphate synthase 2 (1081 aa).

3 disordered regions span residues 116–152, 239–267, and 760–780; these read EQGRKDVTEDMSEDLSEGEKGDVMGETPVALDSPRGN, EPTEMLSSSSTTAGEAHEPEEEEEEEDLG, and IKRQDSGPAQREAEGKAGDVP. A compositionally biased stretch (acidic residues) spans 256–267; that stretch reads EPEEEEEEEDLG.

The protein belongs to the glycosyltransferase 1 family. In terms of assembly, homodimer or homotetramer.

The catalysed reaction is beta-D-fructose 6-phosphate + UDP-alpha-D-glucose = sucrose 6(F)-phosphate + UDP + H(+). Its pathway is glycan biosynthesis; sucrose biosynthesis; sucrose from D-fructose 6-phosphate and UDP-alpha-D-glucose: step 1/2. Its activity is regulated as follows. Activity is regulated by phosphorylation and moderated by concentration of metabolites and light. Functionally, plays a role in photosynthetic sucrose synthesis by catalyzing the rate-limiting step of sucrose biosynthesis from UDP-glucose and fructose- 6-phosphate. Involved in the regulation of carbon partitioning in the leaves of plants. May regulate the synthesis of sucrose and therefore play a major role as a limiting factor in the export of photoassimilates out of the leaf. Plays a role for sucrose availability that is essential for plant growth and fiber elongation. In Craterostigma plantagineum (Blue gem), this protein is Probable sucrose-phosphate synthase 2 (SPS2).